The primary structure comprises 250 residues: MNETEKSTHFGYQTVPTDQKTDKVKHVFESVAAKYDLMNDLMSLGIHRWWKDFAITQCRLRTGQRILDLAGGTGDLAKRISPLVGDEGEVVIADINAAMLNVGRRRLLDQGIFRNIQFIQADAEKLPFPNNFFDRIVIGFGLRNVTNQLAALQSMHRVIKPGGFVVILEFSKPTLAPLKAVYDAYSFQLLPRLGKLVAKDEESYRYLVESIRMHPDQEALLSKMTDAGFEDCDYHNLSGGIVAVHRGYKF.

S-adenosyl-L-methionine is bound by residues T73, D94, and 122–123 (DA).

This sequence belongs to the class I-like SAM-binding methyltransferase superfamily. MenG/UbiE family.

The enzyme catalyses a 2-demethylmenaquinol + S-adenosyl-L-methionine = a menaquinol + S-adenosyl-L-homocysteine + H(+). It catalyses the reaction a 2-methoxy-6-(all-trans-polyprenyl)benzene-1,4-diol + S-adenosyl-L-methionine = a 5-methoxy-2-methyl-3-(all-trans-polyprenyl)benzene-1,4-diol + S-adenosyl-L-homocysteine + H(+). Its pathway is quinol/quinone metabolism; menaquinone biosynthesis; menaquinol from 1,4-dihydroxy-2-naphthoate: step 2/2. It functions in the pathway cofactor biosynthesis; ubiquinone biosynthesis. Methyltransferase required for the conversion of demethylmenaquinol (DMKH2) to menaquinol (MKH2) and the conversion of 2-polyprenyl-6-methoxy-1,4-benzoquinol (DDMQH2) to 2-polyprenyl-3-methyl-6-methoxy-1,4-benzoquinol (DMQH2). This Coxiella burnetii (strain RSA 493 / Nine Mile phase I) protein is Ubiquinone/menaquinone biosynthesis C-methyltransferase UbiE.